A 234-amino-acid chain; its full sequence is Phosphoglycolate phosphatase (234 aa).

Residue aspartate 13 is the Nucleophile of the active site. Aspartate 13, aspartate 15, and aspartate 175 together coordinate Mg(2+).

Belongs to the HAD-like hydrolase superfamily. CbbY/CbbZ/Gph/YieH family. In terms of assembly, monomer. Requires Mg(2+) as cofactor. Chloride is required as a cofactor.

It carries out the reaction 2-phosphoglycolate + H2O = glycolate + phosphate. It functions in the pathway organic acid metabolism; glycolate biosynthesis; glycolate from 2-phosphoglycolate: step 1/1. Its function is as follows. Specifically catalyzes the dephosphorylation of 2-phosphoglycolate. Is involved in the dissimilation of the intracellular 2-phosphoglycolate formed during the DNA repair of 3'-phosphoglycolate ends, a major class of DNA lesions induced by oxidative stress. The chain is Phosphoglycolate phosphatase from Pectobacterium atrosepticum (strain SCRI 1043 / ATCC BAA-672) (Erwinia carotovora subsp. atroseptica).